The chain runs to 181 residues: Ribonuclease M5 (181 aa).

In terms of domain architecture, Toprim spans 3-86 (KEVIVVEGRD…AYISQEEGTK (84 aa)). Mg(2+)-binding residues include Glu9, Asp55, and Asp57.

Belongs to the ribonuclease M5 family. Mg(2+) is required as a cofactor.

It is found in the cytoplasm. The enzyme catalyses Endonucleolytic cleavage of RNA, removing 21 and 42 nucleotides, respectively, from the 5'- and 3'-termini of a 5S-rRNA precursor.. Required for correct processing of both the 5' and 3' ends of 5S rRNA precursor. Cleaves both sides of a double-stranded region yielding mature 5S rRNA in one step. This chain is Ribonuclease M5, found in Clostridium botulinum (strain Hall / ATCC 3502 / NCTC 13319 / Type A).